A 1430-amino-acid polypeptide reads, in one-letter code: rRNA biogenesis protein RRP5 (1430 aa).

6 S1 motif domains span residues 74–160 (DMLV…LSLK), 176–238 (GFIF…CTCV), 261–329 (GSIV…LTLN), 447–511 (GDLV…VSNR), 531–592 (GNVY…LTLP), and 697–771 (QVGD…VSAK). A disordered region spans residues 1041–1145 (KITNGQKKTQ…AKEKAKAEIK (105 aa)). Residues 1043-1053 (TNGQKKTQPLT) show a composition bias toward polar residues. Basic and acidic residues-rich tracts occupy residues 1057–1082 (VKEK…KSET) and 1135–1145 (SAKEKAKAEIK). Residues 1119-1157 (LNVAETQKNAAKKKRLSAKEKAKAEIKEEQRLREIEERN) are a coiled coil. 6 HAT repeats span residues 1161 to 1193 (KARL…FLLS), 1195 to 1232 (TEIE…MELV), 1265 to 1297 (KRKD…AYFW), 1299 to 1333 (GKSD…LYAK), 1335 to 1367 (DNND…MLIK), and 1369 to 1404 (GLID…LEEN).

It localises to the nucleus. The protein resides in the nucleolus. Involved in rRNA processing or maturation during ribosome biogenesis. The sequence is that of rRNA biogenesis protein RRP5 from Drosophila melanogaster (Fruit fly).